A 75-amino-acid polypeptide reads, in one-letter code: Conotoxin Vc6a (75 aa).

Positions 1-22 (MKLTCVVIVAVLFLTANTFATA) are cleaved as a signal peptide. Positions 23 to 49 (DDPRNGLENLFLKAHHEMNPEASKLNE) are excised as a propeptide. 3 cysteine pairs are disulfide-bonded: cysteine 51–cysteine 66, cysteine 58–cysteine 69, and cysteine 65–cysteine 74.

In terms of tissue distribution, expressed by the venom duct.

It localises to the secreted. This is Conotoxin Vc6a from Conus victoriae (Queen Victoria cone).